We begin with the raw amino-acid sequence, 221 residues long: Chaperone protein TorD (221 aa).

Belongs to the TorD/DmsD family. TorD subfamily.

It is found in the cytoplasm. Its function is as follows. Involved in the biogenesis of TorA. Acts on TorA before the insertion of the molybdenum cofactor and, as a result, probably favors a conformation of the apoenzyme that is competent for acquiring the cofactor. The sequence is that of Chaperone protein TorD from Psychrobacter sp. (strain PRwf-1).